The chain runs to 138 residues: Large-conductance mechanosensitive channel (138 aa).

3 helical membrane passes run 15-35, 38-58, and 80-100; these read VDLA…NSVV, IFMP…MFIQ, and GNFI…FFLV.

It belongs to the MscL family. In terms of assembly, homopentamer.

It is found in the cell inner membrane. Functionally, channel that opens in response to stretch forces in the membrane lipid bilayer. May participate in the regulation of osmotic pressure changes within the cell. The chain is Large-conductance mechanosensitive channel from Bartonella bacilliformis (strain ATCC 35685 / KC583 / Herrer 020/F12,63).